We begin with the raw amino-acid sequence, 354 residues long: Vascular endothelial growth factor D (354 aa).

Residues 1–21 (MYREWVVVNVFMMLYVQLVQG) form the signal peptide. A propeptide spans 22–88 (SSNEHGPVKR…SRSASHRSTR (67 aa)) (or 99 (in a minor form)). Intrachain disulfides connect Cys111-Cys153, Cys142-Cys189, and Cys146-Cys191. N-linked (GlcNAc...) asparagine glycans are attached at residues Asn155 and Asn185. The propeptide occupies 206-354 (SIQIPEEDRC…AQGPHSRKNP (149 aa)). The 1; approximate repeat unit spans residues 222-237 (CPIDMLWDSNKCKCVL). The segment at 222-318 (CPIDMLWDSN…PDTCSCEDRC (97 aa)) is 4 X 16 AA repeats of C-X(10)-C-X-C-X(1,3)-C. 3 repeat units span residues 258–273 (CGPHMMFDEDRCECVC), 277–293 (CPKDLIQHPKNCSCFEC), and 301–318 (CQKHKLFHPDTCSCEDRC). An N-linked (GlcNAc...) asparagine glycan is attached at Asn287.

Belongs to the PDGF/VEGF growth factor family. As to quaternary structure, homodimer; non-covalent and antiparallel. Undergoes a complex proteolytic maturation which generates a variety of processed secreted forms with increased activity toward VEGFR-3 and VEGFR-2. VEGF-D first form an antiparallel homodimer linked by disulfide bonds before secretion. The fully processed VEGF-D is composed mostly of two VEGF homology domains (VHDs) bound by non-covalent interactions. In terms of tissue distribution, highly expressed in lung, heart, small intestine and fetal lung, and at lower levels in skeletal muscle, colon, and pancreas.

The protein resides in the secreted. Functionally, growth factor active in angiogenesis, lymphangiogenesis and endothelial cell growth, stimulating their proliferation and migration and also has effects on the permeability of blood vessels. May function in the formation of the venous and lymphatic vascular systems during embryogenesis, and also in the maintenance of differentiated lymphatic endothelium in adults. Binds and activates VEGFR-2 (KDR/FLK1) and VEGFR-3 (FLT4) receptors. In Homo sapiens (Human), this protein is Vascular endothelial growth factor D.